Reading from the N-terminus, the 358-residue chain is WD repeat domain phosphoinositide-interacting protein 4 (358 aa).

WD repeat units follow at residues 2–40 and 188–228; these read AQQRGVNSLQFNQDQSCFCCAMETGVRIYNVEPLMEKGH and AHQS…KLVE. A L/FRRG motif motif is present at residues 229–232; it reads LRRG. One copy of the WD 3 repeat lies at 233-272; the sequence is TDPATLYCINFSHDSSFLCASSDKGTVHIFALKDTKLNRR.

Belongs to the WD repeat PROPPIN family.

The protein resides in the preautophagosomal structure. Its function is as follows. Component of the autophagy machinery that controls the major intracellular degradation process by which cytoplasmic materials are packaged into autophagosomes and delivered to lysosomes for degradation. Binds phosphatidylinositol 3-phosphate (PtdIns3P). This Danio rerio (Zebrafish) protein is WD repeat domain phosphoinositide-interacting protein 4 (wdr45).